A 150-amino-acid chain; its full sequence is Transcription antitermination protein NusB (150 aa).

Belongs to the NusB family.

Involved in transcription antitermination. Required for transcription of ribosomal RNA (rRNA) genes. Binds specifically to the boxA antiterminator sequence of the ribosomal RNA (rrn) operons. The sequence is that of Transcription antitermination protein NusB from Streptococcus pyogenes serotype M4 (strain MGAS10750).